A 422-amino-acid chain; its full sequence is Serine hydroxymethyltransferase (422 aa).

120–122 (GHI) provides a ligand contact to (6S)-5,6,7,8-tetrahydrofolate. Lysine 226 bears the N6-(pyridoxal phosphate)lysine mark. Glutamate 241 serves as a coordination point for (6S)-5,6,7,8-tetrahydrofolate.

It belongs to the SHMT family. In terms of assembly, homodimer. It depends on pyridoxal 5'-phosphate as a cofactor.

Its subcellular location is the cytoplasm. It carries out the reaction 5,10-methylenetetrahydromethanopterin + glycine + H2O = 5,6,7,8-tetrahydromethanopterin + L-serine. The protein operates within amino-acid biosynthesis; glycine biosynthesis; glycine from L-serine: step 1/1. Functionally, catalyzes the reversible interconversion of serine and glycine with tetrahydromethanopterin (H4MPT) serving as the one-carbon carrier. Also exhibits a pteridine-independent aldolase activity toward beta-hydroxyamino acids, producing glycine and aldehydes, via a retro-aldol mechanism. The chain is Serine hydroxymethyltransferase from Methanosphaera stadtmanae (strain ATCC 43021 / DSM 3091 / JCM 11832 / MCB-3).